A 170-amino-acid chain; its full sequence is Plastocyanin, chloroplastic (170 aa).

Residues 1–71 constitute a chloroplast transit peptide; that stretch reads MATVTSAAVA…SAMLASNAMA (71 aa). Residues 72 to 170 form the Plastocyanin-like domain; sequence LEVLLGGDDG…AGMVGKVTVN (99 aa). Histidine 108, cysteine 155, histidine 158, and methionine 163 together coordinate Cu cation.

The protein belongs to the plastocyanin family. Cu(2+) serves as cofactor.

Its subcellular location is the plastid. The protein localises to the chloroplast thylakoid membrane. Participates in electron transfer between P700 and the cytochrome b6-f complex in photosystem I. The sequence is that of Plastocyanin, chloroplastic (PETE) from Solanum lycopersicum (Tomato).